We begin with the raw amino-acid sequence, 428 residues long: Maltoporin (428 aa).

Positions 1–24 (MTTLRKLPIALAVAAGVLSTQAMA) are cleaved as a signal peptide.

Belongs to the porin LamB (TC 1.B.3) family. Homotrimer formed of three 18-stranded antiparallel beta-barrels, containing three independent channels.

Its subcellular location is the cell outer membrane. It carries out the reaction beta-maltose(in) = beta-maltose(out). Involved in the transport of maltose and maltodextrins. The polypeptide is Maltoporin (Yersinia enterocolitica serotype O:8 / biotype 1B (strain NCTC 13174 / 8081)).